Here is a 601-residue protein sequence, read N- to C-terminus: Protein FAM13C (601 aa).

Disordered regions lie at residues 82–134 (SMGN…PQSS) and 192–238 (DGQV…EDLQ). Over residues 98–111 (ESGRNHGESQETEH) the composition is skewed to basic and acidic residues. At serine 130 the chain carries Phosphoserine. Positions 200 to 217 (DPAPASTQSAPADSADPA) are enriched in low complexity. Serine 258 is subject to Phosphoserine. Disordered regions lie at residues 268–304 (QRFN…KEPQ), 327–352 (FEQE…WMND), and 366–485 (KLSE…DPVS). The span at 282–294 (SSQQFMMPRSSSR) shows a compositional bias: low complexity. Basic and acidic residues predominate over residues 327-342 (FEQEKKYRPSHGDKTS). Phosphoserine occurs at positions 405 and 406. A compositionally biased stretch (basic and acidic residues) spans 415 to 446 (VPEKREQTPPQDDGKGTKQDKNLIKPLYDRCR). Over residues 462–471 (QEEEDSDEDC) the composition is skewed to acidic residues.

It belongs to the FAM13 family.

This chain is Protein FAM13C (Fam13c), found in Mus musculus (Mouse).